A 348-amino-acid chain; its full sequence is S-adenosyl-L-methionine-dependent methyl transferase PigF (348 aa).

Residue glutamate 199 participates in S-adenosyl-L-methionine binding. Histidine 247 (proton acceptor) is an active-site residue.

It belongs to the class I-like SAM-binding methyltransferase superfamily. Cation-independent O-methyltransferase family.

The protein operates within antibiotic biosynthesis; prodigiosin biosynthesis. Functionally, involved in the biosynthesis of 4-methoxy-2,2'-bipyrrole-5-carbaldehyde (MBC), one of the terminal products involved in the biosynthesis of the red antibiotic prodigiosin (Pig). Catalyzes the transfer of a methyl group from S-adenosyl-L-methionine (SAM) to the hydroxyl group of 4-hydroxy-2,2'-bipyrrole-5-carbaldehyde (HBC) to yield 4-methoxy-2,2'-bipyrrole-5-carbaldehyde (MBC). The chain is S-adenosyl-L-methionine-dependent methyl transferase PigF from Serratia sp. (strain ATCC 39006) (Prodigiosinella confusarubida).